An 804-amino-acid chain; its full sequence is MAATLLSQCYRIYNSDACKCVSSENHQTTGKRNGNRNLEFDSGISKPARLVLRDRYKVTKQVNDPALTRALRGFADSRLMEDALQLFDEMNKADAFLWNVMIKGFTSCGLYIEAVQFYSRMVFAGVKADTFTYPFVIKSVAGISSLEEGKKIHAMVIKLGFVSDVYVCNSLISLYMKLGCAWDAEKVFEEMPERDIVSWNSMISGYLALGDGFSSLMLFKEMLKCGFKPDRFSTMSALGACSHVYSPKMGKEIHCHAVRSRIETGDVMVMTSILDMYSKYGEVSYAERIFNGMIQRNIVAWNVMIGCYARNGRVTDAFLCFQKMSEQNGLQPDVITSINLLPASAILEGRTIHGYAMRRGFLPHMVLETALIDMYGECGQLKSAEVIFDRMAEKNVISWNSIIAAYVQNGKNYSALELFQELWDSSLVPDSTTIASILPAYAESLSLSEGREIHAYIVKSRYWSNTIILNSLVHMYAMCGDLEDARKCFNHILLKDVVSWNSIIMAYAVHGFGRISVWLFSEMIASRVNPNKSTFASLLAACSISGMVDEGWEYFESMKREYGIDPGIEHYGCMLDLIGRTGNFSAAKRFLEEMPFVPTARIWGSLLNASRNHKDITIAEFAAEQIFKMEHDNTGCYVLLLNMYAEAGRWEDVNRIKLLMESKGISRTSSRSTVEAKGKSHVFTNGDRSHVATNKIYEVLDVVSRMVGEEDIYVHCVSRLRPETLVKSRSNSPRRHSVRLATCFGLISTETGRRVTVRNNTRICRKCHEFLEKASRLTRREIVVGDSKIFHHFSNGRCSCGNYW.

Residues 1–19 constitute a chloroplast transit peptide; the sequence is MAATLLSQCYRIYNSDACK. 16 PPR repeats span residues 63 to 93, 94 to 128, 129 to 163, 164 to 194, 195 to 229, 230 to 264, 266 to 296, 297 to 332, 333 to 363, 364 to 394, 395 to 429, 430 to 464, 465 to 495, 496 to 530, 531 to 561, and 567 to 597; these read NDPA…MNKA, DAFL…GVKA, DTFT…GFVS, DVYV…MPER, DIVS…GFKP, DRFS…RIET, DVMV…MIQR, NIVA…GLQP, DVIT…GFLP, HMVL…MAEK, NVIS…SLVP, DSTT…RYWS, NTII…ILLK, DVVS…RVNP, NKST…MKRE, and GIEH…MPFV. A type E motif region spans residues 602-677; that stretch reads IWGSLLNASR…TSSRSTVEAK (76 aa). The type E(+) motif stretch occupies residues 678–708; it reads GKSHVFTNGDRSHVATNKIYEVLDVVSRMVG. Residues 710–804 are type DYW motif; that stretch reads EDIYVHCVSR…NGRCSCGNYW (95 aa).

The protein belongs to the PPR family. PCMP-H subfamily.

It localises to the plastid. The protein localises to the chloroplast. In Arabidopsis thaliana (Mouse-ear cress), this protein is Pentatricopeptide repeat-containing protein At4g35130, chloroplastic (PCMP-H27).